The sequence spans 327 residues: Malate dehydrogenase (327 aa).

Residue Gly11–Ala17 coordinates NAD(+). Substrate is bound by residues Arg92 and Arg98. NAD(+)-binding positions include Asn105, Gln112, and Val128–Asn130. Substrate is bound by residues Asn130 and Arg160. The active-site Proton acceptor is His185.

It belongs to the LDH/MDH superfamily. MDH type 2 family.

The enzyme catalyses (S)-malate + NAD(+) = oxaloacetate + NADH + H(+). In terms of biological role, catalyzes the reversible oxidation of malate to oxaloacetate. The polypeptide is Malate dehydrogenase (Magnetococcus marinus (strain ATCC BAA-1437 / JCM 17883 / MC-1)).